We begin with the raw amino-acid sequence, 303 residues long: Ribosomal protein uL3 glutamine methyltransferase (303 aa).

This sequence belongs to the protein N5-glutamine methyltransferase family. PrmB subfamily.

The enzyme catalyses L-glutaminyl-[ribosomal protein uL3] + S-adenosyl-L-methionine = N(5)-methyl-L-glutaminyl-[ribosomal protein uL3] + S-adenosyl-L-homocysteine + H(+). Its function is as follows. Methylates large ribosomal subunit protein uL3 on a specific glutamine residue. The polypeptide is Ribosomal protein uL3 glutamine methyltransferase (Neisseria meningitidis serogroup A / serotype 4A (strain DSM 15465 / Z2491)).